The sequence spans 503 residues: Probable cytosol aminopeptidase (503 aa).

Positions 271 and 276 each coordinate Mn(2+). The active site involves K283. Residues D294, D353, and E355 each coordinate Mn(2+). R357 is a catalytic residue.

It belongs to the peptidase M17 family. Mn(2+) is required as a cofactor.

The protein resides in the cytoplasm. The enzyme catalyses Release of an N-terminal amino acid, Xaa-|-Yaa-, in which Xaa is preferably Leu, but may be other amino acids including Pro although not Arg or Lys, and Yaa may be Pro. Amino acid amides and methyl esters are also readily hydrolyzed, but rates on arylamides are exceedingly low.. It carries out the reaction Release of an N-terminal amino acid, preferentially leucine, but not glutamic or aspartic acids.. Presumably involved in the processing and regular turnover of intracellular proteins. Catalyzes the removal of unsubstituted N-terminal amino acids from various peptides. This chain is Probable cytosol aminopeptidase, found in Chlorobium phaeobacteroides (strain DSM 266 / SMG 266 / 2430).